Consider the following 267-residue polypeptide: Farnesyl diphosphate phosphatase YisP (267 aa).

This sequence belongs to the phytoene/squalene synthase family. Monomer.

The catalysed reaction is (2E,6E)-farnesyl diphosphate + H2O = (2E,6E)-farnesol + diphosphate. Diphosphate release from FPP is inhibited by zaragozic acid. Functionally, a farnesyl diphosphate (FPP) phosphatase. Involved in biofilm formation, its disruption blocks biofilm synthesis which is restored by exogenous farnesol. Releases diphosphate from FPP, was initally suggested to be a squalene synthase. Diphosphate release is higher from FPP than geranyl pyrophosphate (GPP) or geranylgeranyl pyrophosphate (GGPP). Biofilm synthesis is partially restored by exogenous squalene, beta-carotene or retinol. Required for integrity of cell membrane lipid rafts. Involved in spatial organization of membranes, required for the flotillin-like proteins FloT and FloA to function correctly. In Bacillus subtilis (strain 168), this protein is Farnesyl diphosphate phosphatase YisP (yisP).